A 384-amino-acid polypeptide reads, in one-letter code: 1-deoxy-D-xylulose 5-phosphate reductoisomerase (384 aa).

The NADPH site is built by threonine 10, glycine 11, serine 12, isoleucine 13, glycine 36, and asparagine 122. Lysine 123 serves as a coordination point for 1-deoxy-D-xylulose 5-phosphate. Glutamate 124 provides a ligand contact to NADPH. Aspartate 148 contacts Mn(2+). Serine 149, glutamate 150, serine 174, and histidine 197 together coordinate 1-deoxy-D-xylulose 5-phosphate. Glutamate 150 lines the Mn(2+) pocket. Residue glycine 203 coordinates NADPH. The 1-deoxy-D-xylulose 5-phosphate site is built by serine 210, asparagine 215, lysine 216, and glutamate 219. Residue glutamate 219 coordinates Mn(2+).

The protein belongs to the DXR family. It depends on Mg(2+) as a cofactor. Mn(2+) is required as a cofactor.

The catalysed reaction is 2-C-methyl-D-erythritol 4-phosphate + NADP(+) = 1-deoxy-D-xylulose 5-phosphate + NADPH + H(+). The protein operates within isoprenoid biosynthesis; isopentenyl diphosphate biosynthesis via DXP pathway; isopentenyl diphosphate from 1-deoxy-D-xylulose 5-phosphate: step 1/6. Functionally, catalyzes the NADPH-dependent rearrangement and reduction of 1-deoxy-D-xylulose-5-phosphate (DXP) to 2-C-methyl-D-erythritol 4-phosphate (MEP). This chain is 1-deoxy-D-xylulose 5-phosphate reductoisomerase, found in Chlorobium phaeobacteroides (strain DSM 266 / SMG 266 / 2430).